The primary structure comprises 293 residues: tRNA-cytidine(32) 2-sulfurtransferase (293 aa).

A PP-loop motif motif is present at residues 62–67 (SGGKDS). [4Fe-4S] cluster-binding residues include Cys-137, Cys-140, and Cys-228.

It belongs to the TtcA family. As to quaternary structure, homodimer. Mg(2+) serves as cofactor. [4Fe-4S] cluster is required as a cofactor.

It localises to the cytoplasm. The catalysed reaction is cytidine(32) in tRNA + S-sulfanyl-L-cysteinyl-[cysteine desulfurase] + AH2 + ATP = 2-thiocytidine(32) in tRNA + L-cysteinyl-[cysteine desulfurase] + A + AMP + diphosphate + H(+). Its pathway is tRNA modification. Its function is as follows. Catalyzes the ATP-dependent 2-thiolation of cytidine in position 32 of tRNA, to form 2-thiocytidine (s(2)C32). The sulfur atoms are provided by the cysteine/cysteine desulfurase (IscS) system. This is tRNA-cytidine(32) 2-sulfurtransferase from Brucella melitensis biotype 1 (strain ATCC 23456 / CCUG 17765 / NCTC 10094 / 16M).